A 335-amino-acid chain; its full sequence is tRNA-dihydrouridine(20/20a) synthase (335 aa).

FMN-binding positions include 20–22 (PML) and Q72. C102 acts as the Proton donor in catalysis. FMN contacts are provided by residues K141, H173, 213–215 (NGG), and 235–236 (GR).

This sequence belongs to the Dus family. DusA subfamily. FMN serves as cofactor.

The enzyme catalyses 5,6-dihydrouridine(20) in tRNA + NADP(+) = uridine(20) in tRNA + NADPH + H(+). The catalysed reaction is 5,6-dihydrouridine(20) in tRNA + NAD(+) = uridine(20) in tRNA + NADH + H(+). It catalyses the reaction 5,6-dihydrouridine(20a) in tRNA + NADP(+) = uridine(20a) in tRNA + NADPH + H(+). It carries out the reaction 5,6-dihydrouridine(20a) in tRNA + NAD(+) = uridine(20a) in tRNA + NADH + H(+). Its function is as follows. Catalyzes the synthesis of 5,6-dihydrouridine (D), a modified base found in the D-loop of most tRNAs, via the reduction of the C5-C6 double bond in target uridines. Specifically modifies U20 and U20a in tRNAs. The protein is tRNA-dihydrouridine(20/20a) synthase of Shewanella oneidensis (strain ATCC 700550 / JCM 31522 / CIP 106686 / LMG 19005 / NCIMB 14063 / MR-1).